The chain runs to 701 residues: DNA ligase (701 aa).

NAD(+) is bound by residues 58 to 62 (DYEYD), 107 to 108 (SL), and Glu138. The active-site N6-AMP-lysine intermediate is Lys140. Arg161, Glu199, Lys323, and Lys347 together coordinate NAD(+). Zn(2+) contacts are provided by Cys441, Cys444, Cys459, and Cys464. In terms of domain architecture, BRCT spans 621 to 701 (EKRGKLAGLN…EEFLKMIGQQ (81 aa)).

It belongs to the NAD-dependent DNA ligase family. LigA subfamily. Requires Mg(2+) as cofactor. Mn(2+) serves as cofactor.

The enzyme catalyses NAD(+) + (deoxyribonucleotide)n-3'-hydroxyl + 5'-phospho-(deoxyribonucleotide)m = (deoxyribonucleotide)n+m + AMP + beta-nicotinamide D-nucleotide.. DNA ligase that catalyzes the formation of phosphodiester linkages between 5'-phosphoryl and 3'-hydroxyl groups in double-stranded DNA using NAD as a coenzyme and as the energy source for the reaction. It is essential for DNA replication and repair of damaged DNA. The sequence is that of DNA ligase from Sulfurihydrogenibium azorense (strain DSM 15241 / OCM 825 / Az-Fu1).